A 987-amino-acid polypeptide reads, in one-letter code: Rho GTPase-activating protein 6 (987 aa).

The span at methionine 1–threonine 21 shows a compositional bias: polar residues. Disordered regions lie at residues methionine 1 to threonine 60, serine 76 to phenylalanine 117, and glycine 144 to serine 170. Serine 37 bears the Phosphoserine mark. The span at glycine 44–arginine 57 shows a compositional bias: gly residues. The span at serine 100–glycine 115 shows a compositional bias: polar residues. The span at glycine 144–serine 159 shows a compositional bias: low complexity. Serine 265 carries the post-translational modification Phosphoserine. Residues lysine 324 to alanine 363 form a disordered region. The segment covering glutamate 328–asparagine 350 has biased composition (low complexity). The SH3-binding signature appears at asparagine 344–proline 354. At serine 365 the chain carries Phosphoserine. A Rho-GAP domain is found at leucine 403–phenylalanine 604. Residues aspartate 641–proline 676 are disordered. Polar residues predominate over residues threonine 658–proline 676. Phosphoserine is present on residues serine 669, serine 675, serine 682, serine 713, serine 758, serine 776, serine 781, serine 790, and serine 824. The interval glycine 709–methionine 731 is disordered. 2 disordered regions span residues threonine 825–serine 847 and tryptophan 863–glutamine 953. Residues leucine 939–serine 948 show a composition bias toward low complexity. Residues serine 941 and serine 944 each carry the phosphoserine modification.

In terms of tissue distribution, expressed in retina and lung.

The protein localises to the cytoplasm. Its function is as follows. GTPase activator for the Rho-type GTPases by converting them to an inactive GDP-bound state. Could regulate the interactions of signaling molecules with the actin cytoskeleton. Promotes continuous elongation of cytoplasmic processes during cell motility and simultaneous retraction of the cell body changing the cell morphology. This is Rho GTPase-activating protein 6 (Arhgap6) from Mus musculus (Mouse).